The chain runs to 236 residues: MKTTGGSEEQKRRAGEKAVEYVNDGDIVGLGTGSTAAAAIDALGDAVAAGYDIHGVPTSFATRDRAIEAGIPLTRIEAVDHIDVAIDGSDEINNNLTLIKGGGAAHAREKVIDATADQFIVVADESKLVETLSEPVPVSTLPMAQKPVKHRLDSLGATTTLRSATMKDGPVITDNGNIVFDCAFGHIENAEALAKSLAEIPGTVAHGLFVNLADVACIGTENGTNVYHGDQDQGQN.

Substrate-binding positions include 32-35, 87-90, and 100-103; these read TGST, DGSD, and KGGG. Glu109 acts as the Proton acceptor in catalysis. Substrate is bound at residue Lys127.

Belongs to the ribose 5-phosphate isomerase family. In terms of assembly, homodimer.

The catalysed reaction is aldehydo-D-ribose 5-phosphate = D-ribulose 5-phosphate. Its pathway is carbohydrate degradation; pentose phosphate pathway; D-ribose 5-phosphate from D-ribulose 5-phosphate (non-oxidative stage): step 1/1. Catalyzes the reversible conversion of ribose-5-phosphate to ribulose 5-phosphate. This Haloquadratum walsbyi (strain DSM 16790 / HBSQ001) protein is Ribose-5-phosphate isomerase A.